The sequence spans 446 residues: MELNDKKVLVVGLAKTGVACARFLASRGARVTVTDMRDEAALAGQLALLEGRGIRRELTRHDAGTFTQSHLIVVSPGVPRTLPQLVMAHEAGVEIISEIELASRFIQAPLVAITGTNGKTTATTITGDIFIKNGFRTFVGGNIGNPLIELLESAEPVERVVAEISSFQLEWIRAFRPAVAALLNLSEDHLDRYASYREYIEAKLRIFENQTADDYAVVNADDELVMEHSRGLRACLFPFSRKQELDEGIFHREGLIVWRHNGREERFPTAGFRLQGVHNLENIMAALACSLLLECRPTESLACVREFEALHHRMEFVRELNGVRWYEDSKATNVGSVEKALESFDAITLIAGGKDKGGSYSPLSRLVRERVRHLVLIGEAAGRMQEELGTLTDTRRAATLEEAVSLAAELTAPGGTVLMSPACSSFDMFRDYEERAQRYIAAVKAL.

An ATP-binding site is contributed by 115–121 (GTNGKTT).

Belongs to the MurCDEF family.

The protein resides in the cytoplasm. It carries out the reaction UDP-N-acetyl-alpha-D-muramoyl-L-alanine + D-glutamate + ATP = UDP-N-acetyl-alpha-D-muramoyl-L-alanyl-D-glutamate + ADP + phosphate + H(+). It participates in cell wall biogenesis; peptidoglycan biosynthesis. Its function is as follows. Cell wall formation. Catalyzes the addition of glutamate to the nucleotide precursor UDP-N-acetylmuramoyl-L-alanine (UMA). This chain is UDP-N-acetylmuramoylalanine--D-glutamate ligase, found in Pelobacter propionicus (strain DSM 2379 / NBRC 103807 / OttBd1).